Reading from the N-terminus, the 170-residue chain is NADH-quinone oxidoreductase subunit E (170 aa).

Residues cysteine 93, cysteine 98, cysteine 134, and cysteine 138 each coordinate [2Fe-2S] cluster.

The protein belongs to the complex I 24 kDa subunit family. The cofactor is [2Fe-2S] cluster.

The enzyme catalyses a quinone + NADH + 5 H(+)(in) = a quinol + NAD(+) + 4 H(+)(out). Functionally, NDH-1 shuttles electrons from NADH, via FMN and iron-sulfur (Fe-S) centers, to quinones in the respiratory chain. Couples the redox reaction to proton translocation (for every two electrons transferred, four hydrogen ions are translocated across the cytoplasmic membrane), and thus conserves the redox energy in a proton gradient. The chain is NADH-quinone oxidoreductase subunit E (nuoE) from Rickettsia typhi (strain ATCC VR-144 / Wilmington).